The primary structure comprises 316 residues: DNA-directed RNA polymerase subunit alpha (316 aa).

Positions 1–229 are alpha N-terminal domain (alpha-NTD); that stretch reads MLEMEKPRID…EYLKLFTEID (229 aa). An alpha C-terminal domain (alpha-CTD) region spans residues 246-316; sequence KDKILEMSIE…LNLSFRKSED (71 aa).

It belongs to the RNA polymerase alpha chain family. Homodimer. The RNAP catalytic core consists of 2 alpha, 1 beta, 1 beta' and 1 omega subunit. When a sigma factor is associated with the core the holoenzyme is formed, which can initiate transcription.

The catalysed reaction is RNA(n) + a ribonucleoside 5'-triphosphate = RNA(n+1) + diphosphate. DNA-dependent RNA polymerase catalyzes the transcription of DNA into RNA using the four ribonucleoside triphosphates as substrates. This chain is DNA-directed RNA polymerase subunit alpha, found in Syntrophomonas wolfei subsp. wolfei (strain DSM 2245B / Goettingen).